The following is an 854-amino-acid chain: DNA mismatch repair protein MutS (854 aa).

Residue 608-615 coordinates ATP; the sequence is GPNMAGKS.

It belongs to the DNA mismatch repair MutS family.

Functionally, this protein is involved in the repair of mismatches in DNA. It is possible that it carries out the mismatch recognition step. This protein has a weak ATPase activity. The chain is DNA mismatch repair protein MutS from Leuconostoc mesenteroides subsp. mesenteroides (strain ATCC 8293 / DSM 20343 / BCRC 11652 / CCM 1803 / JCM 6124 / NCDO 523 / NBRC 100496 / NCIMB 8023 / NCTC 12954 / NRRL B-1118 / 37Y).